Consider the following 879-residue polypeptide: Metabotropic glutamate receptor 3 (879 aa).

The first 22 residues, 1–22 (MKMLTRLQVLMLALFSKGFLVS), serve as a signal peptide directing secretion. Topologically, residues 23–576 (LGDHNFMRRE…EDYIRWEDAW (554 aa)) are extracellular. The cysteines at positions 57 and 99 are disulfide-linked. L-glutamate contacts are provided by residues serine 151 and 172–174 (AST). A glycan (N-linked (GlcNAc...) asparagine) is linked at asparagine 209. Tyrosine 222 contacts L-glutamate. 7 cysteine pairs are disulfide-bonded: cysteine 240/cysteine 527, cysteine 361/cysteine 373, cysteine 412/cysteine 419, cysteine 509/cysteine 528, cysteine 513/cysteine 531, cysteine 534/cysteine 546, and cysteine 549/cysteine 562. N-linked (GlcNAc...) asparagine glycosylation occurs at asparagine 292. Aspartate 301 contacts L-glutamate. Lysine 389 contributes to the L-glutamate binding site. N-linked (GlcNAc...) asparagine glycosylation is found at asparagine 414 and asparagine 439. Residues 577-599 (AIGPVTIACLGFMCTCIVITVFI) form a helical membrane-spanning segment. At 600-613 (KHNNTPLVKASGRE) the chain is on the cytoplasmic side. Residues 614-634 (LCYILLFGVSLSYCMTFFFIA) form a helical membrane-spanning segment. The Extracellular portion of the chain corresponds to 635–645 (KPSPVICALRR). A helical transmembrane segment spans residues 646-664 (LGLGTSFAICYSALLTKTN). The Cytoplasmic portion of the chain corresponds to 665–688 (CIARIFDGVKNGAQRPKFISPSSQ). A helical membrane pass occupies residues 689–709 (VFICLGLILVQIVMVSVWLIL). Over 710–734 (ETPGTRRYTLPEKRETVILKCNVKD) the chain is Extracellular. The chain crosses the membrane as a helical span at residues 735-756 (SSMLISLTYDVVLVILCTVYAF). The Cytoplasmic portion of the chain corresponds to 757–769 (KTRKCPENFNEAK). The helical transmembrane segment at 770–792 (FIGFTMYTTCIIWLAFLPIFYVT) threads the bilayer. Topologically, residues 793-802 (SSDYRVQTTT) are extracellular. A helical membrane pass occupies residues 803–828 (MCISVSLSGFVVLGCLFAPKVHIVLF). At 829 to 879 (QPQKNVVTHRLHLNRFSVSGTATTYSQSSASTYVPTVCNGREVLDSTTSSL) the chain is on the cytoplasmic side.

Belongs to the G-protein coupled receptor 3 family. In terms of assembly, interacts with TAMALIN.

The protein localises to the cell membrane. Its function is as follows. G-protein coupled receptor for glutamate. Ligand binding causes a conformation change that triggers signaling via guanine nucleotide-binding proteins (G proteins) and modulates the activity of down-stream effectors. Signaling inhibits adenylate cyclase activity. The polypeptide is Metabotropic glutamate receptor 3 (Grm3) (Mus musculus (Mouse)).